The following is a 494-amino-acid chain: Cytochrome P450 2A10 (494 aa).

Residue lysine 379 is modified to N6-acetyllysine. Cysteine 439 provides a ligand contact to heme.

Belongs to the cytochrome P450 family. It depends on heme as a cofactor. Expressed in liver and lung as well as in nasal tissues.

The protein localises to the endoplasmic reticulum membrane. Its subcellular location is the microsome membrane. It catalyses the reaction an organic molecule + reduced [NADPH--hemoprotein reductase] + O2 = an alcohol + oxidized [NADPH--hemoprotein reductase] + H2O + H(+). Catalyzes the oxygenation of a variety of substrates, including ethanol and procarcinogens such as N-nitrosodiethylamine and phenacetin. Exhibits a high coumarin 7-hydroxylase activity. Converts also testosterone to androstenedione. The protein is Cytochrome P450 2A10 (CYP2A10) of Oryctolagus cuniculus (Rabbit).